Reading from the N-terminus, the 199-residue chain is Adenylyl-sulfate kinase (199 aa).

34–41 (GLSGSGKS) contributes to the ATP binding site. S108 (phosphoserine intermediate) is an active-site residue.

Belongs to the APS kinase family.

It carries out the reaction adenosine 5'-phosphosulfate + ATP = 3'-phosphoadenylyl sulfate + ADP + H(+). Its pathway is sulfur metabolism; hydrogen sulfide biosynthesis; sulfite from sulfate: step 2/3. In terms of biological role, catalyzes the synthesis of activated sulfate. The chain is Adenylyl-sulfate kinase from Oceanobacillus iheyensis (strain DSM 14371 / CIP 107618 / JCM 11309 / KCTC 3954 / HTE831).